A 404-amino-acid chain; its full sequence is Probable tRNA sulfurtransferase (404 aa).

A THUMP domain is found at 60-165 (RSVIEALKPV…DEAAYLSHED (106 aa)). Residues 183–184 (ML), 208–209 (HF), R265, G287, and Q296 contribute to the ATP site.

It belongs to the ThiI family.

The protein localises to the cytoplasm. The enzyme catalyses [ThiI sulfur-carrier protein]-S-sulfanyl-L-cysteine + a uridine in tRNA + 2 reduced [2Fe-2S]-[ferredoxin] + ATP + H(+) = [ThiI sulfur-carrier protein]-L-cysteine + a 4-thiouridine in tRNA + 2 oxidized [2Fe-2S]-[ferredoxin] + AMP + diphosphate. It catalyses the reaction [ThiS sulfur-carrier protein]-C-terminal Gly-Gly-AMP + S-sulfanyl-L-cysteinyl-[cysteine desulfurase] + AH2 = [ThiS sulfur-carrier protein]-C-terminal-Gly-aminoethanethioate + L-cysteinyl-[cysteine desulfurase] + A + AMP + 2 H(+). It participates in cofactor biosynthesis; thiamine diphosphate biosynthesis. Catalyzes the ATP-dependent transfer of a sulfur to tRNA to produce 4-thiouridine in position 8 of tRNAs, which functions as a near-UV photosensor. Also catalyzes the transfer of sulfur to the sulfur carrier protein ThiS, forming ThiS-thiocarboxylate. This is a step in the synthesis of thiazole, in the thiamine biosynthesis pathway. The sulfur is donated as persulfide by IscS. The polypeptide is Probable tRNA sulfurtransferase (Streptococcus equi subsp. zooepidemicus (strain H70)).